A 345-amino-acid chain; its full sequence is L-threonine 3-dehydrogenase (345 aa).

Cys-38 serves as a coordination point for Zn(2+). Residues Thr-40 and His-43 each act as charge relay system in the active site. Positions 63, 64, 93, 96, 99, and 107 each coordinate Zn(2+). NAD(+)-binding positions include Ile-176, Asp-196, Arg-201, 263 to 265 (LGT), and 287 to 288 (VT).

The protein belongs to the zinc-containing alcohol dehydrogenase family. As to quaternary structure, homotetramer. Requires Zn(2+) as cofactor.

The protein localises to the cytoplasm. It carries out the reaction L-threonine + NAD(+) = (2S)-2-amino-3-oxobutanoate + NADH + H(+). Its pathway is amino-acid degradation; L-threonine degradation via oxydo-reductase pathway; glycine from L-threonine: step 1/2. In terms of biological role, catalyzes the NAD(+)-dependent oxidation of L-threonine to 2-amino-3-ketobutyrate. This is L-threonine 3-dehydrogenase from Cutibacterium acnes (strain DSM 16379 / KPA171202) (Propionibacterium acnes).